The chain runs to 408 residues: Imidazolonepropionase (408 aa).

Residues H73 and H75 each contribute to the Fe(3+) site. Zn(2+)-binding residues include H73 and H75. R82, Y145, and H178 together coordinate 4-imidazolone-5-propanoate. An N-formimidoyl-L-glutamate-binding site is contributed by Y145. H243 provides a ligand contact to Fe(3+). H243 is a binding site for Zn(2+). A 4-imidazolone-5-propanoate-binding site is contributed by Q246. D318 contacts Fe(3+). D318 serves as a coordination point for Zn(2+). 2 residues coordinate N-formimidoyl-L-glutamate: N320 and G322. 4-imidazolone-5-propanoate is bound at residue S323.

The protein belongs to the metallo-dependent hydrolases superfamily. HutI family. It depends on Zn(2+) as a cofactor. Fe(3+) is required as a cofactor.

It is found in the cytoplasm. The catalysed reaction is 4-imidazolone-5-propanoate + H2O = N-formimidoyl-L-glutamate. The protein operates within amino-acid degradation; L-histidine degradation into L-glutamate; N-formimidoyl-L-glutamate from L-histidine: step 3/3. Functionally, catalyzes the hydrolytic cleavage of the carbon-nitrogen bond in imidazolone-5-propanoate to yield N-formimidoyl-L-glutamate. It is the third step in the universal histidine degradation pathway. In Shewanella sp. (strain ANA-3), this protein is Imidazolonepropionase.